We begin with the raw amino-acid sequence, 399 residues long: 26S proteasome regulatory subunit S10B homolog B (399 aa).

180-187 (GPPGTGKT) contributes to the ATP binding site. Residue Lys-203 forms a Glycyl lysine isopeptide (Lys-Gly) (interchain with G-Cter in ubiquitin) linkage.

This sequence belongs to the AAA ATPase family. Component of the 19S regulatory particle (RP/PA700) base subcomplex of the 26S proteasome. The 26S proteasome is composed of a core protease (CP), known as the 20S proteasome, capped at one or both ends by the 19S regulatory particle (RP/PA700). The RP/PA700 complex is composed of at least 17 different subunits in two subcomplexes, the base and the lid, which form the portions proximal and distal to the 20S proteolytic core, respectively.

It localises to the cytoplasm. It is found in the nucleus. In terms of biological role, the 26S proteasome is involved in the ATP-dependent degradation of ubiquitinated proteins. The regulatory (or ATPase) complex confers ATP dependency and substrate specificity to the 26S complex. The chain is 26S proteasome regulatory subunit S10B homolog B (RPT4B) from Arabidopsis thaliana (Mouse-ear cress).